We begin with the raw amino-acid sequence, 535 residues long: Light-independent protochlorophyllide reductase subunit B (535 aa).

D36 contributes to the [4Fe-4S] cluster binding site. The active-site Proton donor is the D287. 422-423 (GL) serves as a coordination point for substrate.

Belongs to the ChlB/BchB/BchZ family. In terms of assembly, protochlorophyllide reductase is composed of three subunits; BchL, BchN and BchB. Forms a heterotetramer of two BchB and two BchN subunits. It depends on [4Fe-4S] cluster as a cofactor.

The enzyme catalyses chlorophyllide a + oxidized 2[4Fe-4S]-[ferredoxin] + 2 ADP + 2 phosphate = protochlorophyllide a + reduced 2[4Fe-4S]-[ferredoxin] + 2 ATP + 2 H2O. Its pathway is porphyrin-containing compound metabolism; bacteriochlorophyll biosynthesis (light-independent). Functionally, component of the dark-operative protochlorophyllide reductase (DPOR) that uses Mg-ATP and reduced ferredoxin to reduce ring D of protochlorophyllide (Pchlide) to form chlorophyllide a (Chlide). This reaction is light-independent. The NB-protein (BchN-BchB) is the catalytic component of the complex. This is Light-independent protochlorophyllide reductase subunit B from Rhodopseudomonas palustris (strain BisB5).